Reading from the N-terminus, the 235-residue chain is Zinc transporter ZIP9 (235 aa).

The N-linked (GlcNAc...) asparagine glycan is linked to asparagine 2. 4 helical membrane-spanning segments follow: residues 11-31 (SCVP…CWWT), 75-95 (TTTL…GAAA), 104-124 (LIVF…LVSF), and 138-158 (HLLV…LGLS). The N-linked (GlcNAc...) asparagine glycan is linked to asparagine 169. The next 2 helical transmembrane spans lie at 172–192 (GMAM…HVLP) and 214–234 (LEVA…VGHQ).

This sequence belongs to the ZIP transporter (TC 2.A.5) family.

The protein resides in the golgi apparatus. It localises to the trans-Golgi network membrane. The protein localises to the cell membrane. Its subcellular location is the cytoplasm. It is found in the perinuclear region. The protein resides in the mitochondrion. It localises to the nucleus. It catalyses the reaction Zn(2+)(in) = Zn(2+)(out). Functionally, transports zinc ions across cell and organelle membranes into the cytoplasm and regulates intracellular zinc homeostasis. Participates in the zinc ions efflux out of the secretory compartments. Regulates intracellular zinc level, resulting in the enhancement of AKT1 and MAPK3/MAPK1 (Erk1/2) phosphorylation in response to the BCR activation. Also functions as a membrane androgen receptor that mediates, through a G protein, the non-classical androgen signaling pathway, characterized by the activation of MAPK3/MAPK1 (Erk1/2) and transcription factors CREB1 or ATF1. This pathway contributes to CLDN1 and CLDN5 expression and tight junction formation between adjacent Sertoli cells. Mediates androgen-induced vascular endothelial cell proliferation through activation of an inhibitory G protein leading to the AKT1 and MAPK3/MAPK1 (Erk1/2) activation which in turn modulate inhibition (phosphorylation) of GSK3B and CCND1 transcription. Moreover, has dual functions as a membrane-bound androgen receptor and as an androgen-dependent zinc transporter both of which are mediated through an inhibitory G protein (Gi) that mediates both MAP kinase and zinc signaling leading to the androgen-dependent apoptotic process. The polypeptide is Zinc transporter ZIP9 (Macaca fascicularis (Crab-eating macaque)).